Reading from the N-terminus, the 298-residue chain is D-alanine--D-alanine ligase (298 aa).

The region spanning 97–290 (FYSLFKNYIQ…FDELINIIIK (194 aa)) is the ATP-grasp domain. 124 to 173 (PFIIKPRKSGSSKGVYIIHNENEYKFYLEKDLKEFQEVLVQEYIKGREIT) lines the ATP pocket. 3 residues coordinate Mg(2+): D245, E257, and N259.

The protein belongs to the D-alanine--D-alanine ligase family. Mg(2+) serves as cofactor. The cofactor is Mn(2+).

Its subcellular location is the cytoplasm. It carries out the reaction 2 D-alanine + ATP = D-alanyl-D-alanine + ADP + phosphate + H(+). It participates in cell wall biogenesis; peptidoglycan biosynthesis. Functionally, cell wall formation. This is D-alanine--D-alanine ligase from Petrotoga mobilis (strain DSM 10674 / SJ95).